The primary structure comprises 145 residues: UPF0102 protein BAV3162 (145 aa).

The protein belongs to the UPF0102 family.

The chain is UPF0102 protein BAV3162 from Bordetella avium (strain 197N).